A 1044-amino-acid chain; its full sequence is Elongation factor 3B (1044 aa).

Ser-2 is subject to N-acetylserine. Residues 5–42 (QQSITVLEELFRKLETATSETREGISSELSSFLNGNII) form an HEAT 1 repeat. ADP-binding residues include Ile-42, His-44, and Ser-83. 6 HEAT repeats span residues 86-123 (PYIV…AVNP), 124-162 (VAVK…AAKE), 166-203 (LRMP…TVDN), 205-241 (DIER…EVTP), 242-279 (ATLS…LVED), and 285-323 (PFLG…VGNV). 2 positions are modified to N6,N6,N6-trimethyllysine: Lys-187 and Lys-196. ADP contacts are provided by Thr-392, His-396, and Glu-397. ABC transporter domains lie at 426–641 (DEGE…YYEL) and 667–993 (VKVS…KKEE). ADP is bound at residue Asn-703. Lys-789 carries the post-translational modification N6,N6,N6-trimethyllysine. Positions 922, 925, and 951 each coordinate ADP. Thr-972 is subject to Phosphothreonine. At Ser-974 the chain carries Phosphoserine. Positions 975–1044 (GHNWVAGQGA…DEYVSSDEDF (70 aa)) are disordered. The segment covering 987–999 (RIEKKEEEGDKFD) has biased composition (basic and acidic residues). The segment covering 1020–1031 (RKKKKERMKKKK) has biased composition (basic residues). Phosphoserine occurs at positions 1039 and 1040.

This sequence belongs to the ABC transporter superfamily. ABCF family. EF3 subfamily. In terms of assembly, monomer.

The protein localises to the cytoplasm. It carries out the reaction ATP + H2O = ADP + phosphate + H(+). It participates in protein biosynthesis; polypeptide chain elongation. Ribosome-dependent ATPase that promotes the translation of proteins required for detoxification of reactive oxygen species. Required for the ATP-dependent release of deacylated tRNA from the ribosomal E-site during protein biosynthesis. Stimulates the eEF1A-dependent binding of aminoacyl-tRNA to the ribosomal A-site, which has reduced affinity for tRNA as long as the E-site is occupied. Assists translation termination by stimulating the release of nascent protein from the ribosome by release factors. This is Elongation factor 3B from Saccharomyces cerevisiae (strain ATCC 204508 / S288c) (Baker's yeast).